We begin with the raw amino-acid sequence, 218 residues long: Small ribosomal subunit protein uS3c (218 aa).

The KH type-2 domain maps to 43–118 (IKNYVQKNPR…RLNIAIARIS (76 aa)).

The protein belongs to the universal ribosomal protein uS3 family. Part of the 30S ribosomal subunit.

It localises to the plastid. Its subcellular location is the chloroplast. The polypeptide is Small ribosomal subunit protein uS3c (rps3) (Acorus calamus (Sweet flag)).